Reading from the N-terminus, the 208-residue chain is MDNSTPPPGGFKGGLGSIFGGGTPEYSNTELSGVPLTGMSPLSPYLNVDPRYLIQDTDEFILPTGANKTRGRFELAFFTIGGCCITGAAFGTLNGLRMGLSETRDMPWSKPRNVQILNMVTRQGASWANTLGSVALLYSVFGVAIEKARGAEDDLNTVAAGTLTGMVFKSTGGLKGVARGGLIGLAMSGLYALYNNWDHLKGKSPSHY.

3 helical membrane-spanning segments follow: residues 73 to 93, 125 to 145, and 173 to 193; these read FELA…FGTL, ASWA…GVAI, and GLKG…LYAL.

This sequence belongs to the Tim17/Tim22/Tim23 family. In terms of assembly, component of the TIM23 complex at least composed of timm23, timm17 and timm50. The complex interacts with the timm44 component of the PAM complex.

It localises to the mitochondrion inner membrane. Its function is as follows. Essential component of the TIM23 complex, a complex that mediates the translocation of transit peptide-containing proteins across the mitochondrial inner membrane. Plays an essential role in early embryonic development. This Danio rerio (Zebrafish) protein is Mitochondrial import inner membrane translocase subunit Tim23 (timm23).